Reading from the N-terminus, the 131-residue chain is MQSLSHAVKTSLPNYLSSLPVPDSVGGWFKLSFKDWLALIPPTAVVVGIGYISYQALCPAAQRKSCSGRCNDNIRKHEAKVVDMIDIENIADKAAFCRCWKTKNWPYCDGSHGEHNKNTGDNVGPVVIKRN.

Residues 1–35 (MQSLSHAVKTSLPNYLSSLPVPDSVGGWFKLSFKD) lie on the Lumenal side of the membrane. A helical transmembrane segment spans residues 36 to 58 (WLALIPPTAVVVGIGYISYQALC). Topologically, residues 59-131 (PAAQRKSCSG…NVGPVVIKRN (73 aa)) are cytoplasmic. Residues Cys-97, Cys-99, Cys-108, and His-112 each coordinate [2Fe-2S] cluster.

This sequence belongs to the CISD protein family. CISD2 subfamily. The cofactor is [2Fe-2S] cluster.

The protein resides in the endoplasmic reticulum membrane. This is CDGSH iron-sulfur domain-containing protein 2 homolog from Drosophila mojavensis (Fruit fly).